Here is a 237-residue protein sequence, read N- to C-terminus: Proteasome subunit alpha type-5-B (237 aa).

Met-1 carries the N-acetylmethionine modification. Glycyl lysine isopeptide (Lys-Gly) (interchain with G-Cter in ubiquitin) cross-links involve residues Lys-43, Lys-66, and Lys-185.

It belongs to the peptidase T1A family. Component of the 20S core complex of the 26S proteasome. The 26S proteasome is composed of a core protease (CP), known as the 20S proteasome, capped at one or both ends by the 19S regulatory particle (RP/PA700). The 20S proteasome core is composed of 28 subunits that are arranged in four stacked rings, resulting in a barrel-shaped structure. The two end rings are each formed by seven alpha subunits, and the two central rings are each formed by seven beta subunits. The catalytic chamber with the active sites is on the inside of the barrel.

It is found in the cytoplasm. The protein resides in the nucleus. Its function is as follows. The proteasome is a multicatalytic proteinase complex which is characterized by its ability to cleave peptides with Arg, Phe, Tyr, Leu, and Glu adjacent to the leaving group at neutral or slightly basic pH. The proteasome has an ATP-dependent proteolytic activity. The protein is Proteasome subunit alpha type-5-B (PAE2) of Arabidopsis thaliana (Mouse-ear cress).